The following is a 277-amino-acid chain: Carbonyl reductase [NADPH] 1 (277 aa).

An N-acetylserine modification is found at serine 2. Phosphoserine is present on residues serine 2 and serine 30. NADP(+) is bound by residues valine 10–valine 34, aspartate 63–isoleucine 64, and asparagine 90. Glutathione-binding positions include phenylalanine 95–valine 97 and glutamine 106. Serine 140 contributes to the substrate binding site. Alanine 193 to tyrosine 194 provides a ligand contact to glutathione. Catalysis depends on tyrosine 194, which acts as the Proton acceptor. NADP(+) is bound by residues tyrosine 194 to lysine 198 and valine 231 to threonine 233. Lysine 239 bears the N6-1-carboxyethyl lysine mark.

The protein belongs to the short-chain dehydrogenases/reductases (SDR) family. As to quaternary structure, monomer. In terms of tissue distribution, expressed in kidney (at protein level).

Its subcellular location is the cytoplasm. It carries out the reaction a secondary alcohol + NADP(+) = a ketone + NADPH + H(+). The enzyme catalyses a primary alcohol + NADP(+) = an aldehyde + NADPH + H(+). It catalyses the reaction prostaglandin F2alpha + NADP(+) = prostaglandin E2 + NADPH + H(+). The catalysed reaction is prostaglandin E1 + NADP(+) = 15-oxoprostaglandin E1 + NADPH + H(+). It carries out the reaction menadione + NADPH + H(+) = menadiol + NADP(+). The enzyme catalyses prostaglandin D2 + NADP(+) = 15-oxoprostaglandin D2 + NADPH + H(+). It catalyses the reaction prostaglandin E2 + NADP(+) = 15-oxoprostaglandin E2 + NADPH + H(+). The catalysed reaction is prostaglandin F2alpha + NADP(+) = 15-oxoprostaglandin F2alpha + NADPH + H(+). It carries out the reaction daunorubicin + NADPH + H(+) = 13-dihydrodaunorubicin + NADP(+). The enzyme catalyses S-nitrosoglutathione + NADPH + H(+) = S-(hydroxysulfenamide)glutathione + NADP(+). It catalyses the reaction cortisol + NADPH + H(+) = 20beta-dihydrocortisol + NADP(+). The catalysed reaction is corticosterone + NADPH + H(+) = 20beta-dihydrocorticosterone + NADP(+). Inhibited by quercetin, rutenin and its derivatives. In terms of biological role, NADPH-dependent reductase with broad substrate specificity. Catalyzes the reduction of a wide variety of carbonyl compounds including quinones, prostaglandins, menadione, plus various xenobiotics. Catalyzes the reduction of the antitumor anthracyclines doxorubicin and daunorubicin to the cardiotoxic compounds doxorubicinol and daunorubicinol. Can convert prostaglandin E to prostaglandin F2-alpha. Can bind glutathione, which explains its higher affinity for glutathione-conjugated substrates. Catalyzes the reduction of S-nitrosoglutathione. In addition, participates in the glucocorticoid metabolism by catalyzing the NADPH-dependent cortisol/corticosterone into 20beta-dihydrocortisol (20b-DHF) or 20beta-corticosterone (20b-DHB), which are weak agonists of NR3C1 and NR3C2 in adipose tissue. This is Carbonyl reductase [NADPH] 1 from Homo sapiens (Human).